A 62-amino-acid chain; its full sequence is Large ribosomal subunit protein uL29 (62 aa).

Belongs to the universal ribosomal protein uL29 family.

The protein is Large ribosomal subunit protein uL29 of Trichlorobacter lovleyi (strain ATCC BAA-1151 / DSM 17278 / SZ) (Geobacter lovleyi).